The primary structure comprises 113 residues: uncharacterized protein (113 aa).

The HTH cro/C1-type domain occupies 16–70; that stretch reads LYEYLEPLDLKINELAELLHVHRNSVSALINNNRKLTTEMAFRLAKVFDTTVDFW. The H-T-H motif DNA-binding region spans 27-46; sequence INELAELLHVHRNSVSALIN.

The protein belongs to the VapA/VapI family.

This is an uncharacterized protein from Escherichia coli O6:H1 (strain CFT073 / ATCC 700928 / UPEC).